Here is a 286-residue protein sequence, read N- to C-terminus: GTP cyclohydrolase MptA (286 aa).

The protein belongs to the GTP cyclohydrolase IV family. As to quaternary structure, homodimer. The cofactor is Fe(2+).

The enzyme catalyses GTP + H2O = 7,8-dihydroneopterin 2',3'-cyclic phosphate + formate + diphosphate + H(+). It participates in cofactor biosynthesis; 5,6,7,8-tetrahydromethanopterin biosynthesis. In terms of biological role, converts GTP to 7,8-dihydro-D-neopterin 2',3'-cyclic phosphate, the first intermediate in the biosynthesis of coenzyme methanopterin. This chain is GTP cyclohydrolase MptA, found in Thermoplasma acidophilum (strain ATCC 25905 / DSM 1728 / JCM 9062 / NBRC 15155 / AMRC-C165).